The primary structure comprises 149 residues: Calmodulin (149 aa).

EF-hand domains lie at 8-43 (EQIAEFKEAFSLFDKDGDGNITTKELGTVMRSLGQN), 44-79 (PTEAELQDMINEVDADGNGTIDFPEFLTMMARKMAD), 81-116 (DTEEEIREAFKVFDKDGNGFISAAELRHVMTNLGEK), and 117-149 (LSDEEVDEMIREADVDGDGQVNYDEFVKMMLSK). Residues Asp21, Asp23, Asp25, Asn27, Glu32, Asp57, Asp59, Asn61, Thr63, Glu68, Asp94, Asp96, Asn98, and Glu105 each contribute to the Ca(2+) site. Position 116 is an N6,N6,N6-trimethyllysine (Lys116). The Ca(2+) site is built by Asp130, Asp132, Asp134, Gln136, and Glu141.

Belongs to the calmodulin family.

Functionally, calmodulin mediates the control of a large number of enzymes, ion channels and other proteins by Ca(2+). Among the enzymes to be stimulated by the calmodulin-Ca(2+) complex are a number of protein kinases and phosphatases. This Physarum polycephalum (Slime mold) protein is Calmodulin.